Here is a 181-residue protein sequence, read N- to C-terminus: MNTEKISLIKASIKSIPDYPKAGILFRDVTSLMEDPAAYKATIDLLVDTYKGMGFTKIVGTEARGFLFGAPLALELGVGFIPVRKPGKLPRQTVAQSYELEYGTDTLEIHTDAIVEGDKVLMVDDLLATGGTIEATTKLIRQLGGVVEHAAFVINLPEIGGDKRLQGLGLEVFSICEFDGH.

The protein belongs to the purine/pyrimidine phosphoribosyltransferase family. As to quaternary structure, homodimer.

The protein resides in the cytoplasm. It catalyses the reaction AMP + diphosphate = 5-phospho-alpha-D-ribose 1-diphosphate + adenine. The protein operates within purine metabolism; AMP biosynthesis via salvage pathway; AMP from adenine: step 1/1. Catalyzes a salvage reaction resulting in the formation of AMP, that is energically less costly than de novo synthesis. This chain is Adenine phosphoribosyltransferase, found in Vibrio atlanticus (strain LGP32) (Vibrio splendidus (strain Mel32)).